Here is a 390-residue protein sequence, read N- to C-terminus: Cyclic amide hydrolase (390 aa).

Positions 1–118 are RU A; it reads MPNPEASLSP…TVVTQEWVAD (118 aa). Substrate-binding positions include Arg66 and 97–98; that span reads SG. The tract at residues 127-268 is RU B; that stretch reads GLVVGRGHTE…GEVLLLANSA (142 aa). Lys177 is a catalytic residue. Substrate contacts are provided by residues Asn213, 251–252, Lys346, and 365–366; these read SS and SG. Ser251 (nucleophile) is an active-site residue. The segment at 274-390 is RU C; it reads LRIGHGITRD…VAAVVRRLPA (117 aa).

It belongs to the cyclic amide hydrolase (CyAH) family. Homotetramer; disulfide-linked. The disulfide forms between 2 monomers in the tetramer, such that each tetramer contains 2 sets of vicinal disulfides.

Cyclic amide hydrolase of unknown substrate specificity. Catalyzes the hydrolytic ring-opening of a cyclic amide. Does not act on cyanuric acid nor barbituric acid. This is Cyclic amide hydrolase from Pseudofrankia inefficax (strain DSM 45817 / CECT 9037 / DDB 130130 / EuI1c) (Frankia inefficax).